The sequence spans 420 residues: Phosphoribosylamine--glycine ligase (420 aa).

In terms of domain architecture, ATP-grasp spans 108-314 (KEIMVKYGVP…FAQNITDILD (207 aa)). 134–195 (IEKHGAPIVV…EEFLEGEEFS (62 aa)) is a binding site for ATP. Mg(2+) is bound by residues E284 and N286.

Belongs to the GARS family. Mg(2+) serves as cofactor. The cofactor is Mn(2+).

The catalysed reaction is 5-phospho-beta-D-ribosylamine + glycine + ATP = N(1)-(5-phospho-beta-D-ribosyl)glycinamide + ADP + phosphate + H(+). It functions in the pathway purine metabolism; IMP biosynthesis via de novo pathway; N(1)-(5-phospho-D-ribosyl)glycinamide from 5-phospho-alpha-D-ribose 1-diphosphate: step 2/2. The polypeptide is Phosphoribosylamine--glycine ligase (Streptococcus pneumoniae serotype 4 (strain ATCC BAA-334 / TIGR4)).